We begin with the raw amino-acid sequence, 587 residues long: Polyadenylate-binding protein-interacting protein 3 (587 aa).

In terms of domain architecture, Sm spans 51–132 (LLVYFTTCNI…LVQVIAKDLP (82 aa)). The segment at 422 to 503 (AKSENSSGWP…QSPQSPVFDG (82 aa)) is disordered. The segment covering 431–464 (PGSSISRNSENSAASSASNLPILSPSSSGSLSSE) has biased composition (low complexity). The PAM2-like 1; degenerate motif lies at 467–475 (TLNPNAKEF). The PAM2-like 2 motif lies at 476 to 486 (KLNPNAKSFKP). Residues 486–498 (PSPSATRPQSPQS) show a composition bias toward polar residues.

The protein is Polyadenylate-binding protein-interacting protein 3 (CID3) of Arabidopsis thaliana (Mouse-ear cress).